A 342-amino-acid polypeptide reads, in one-letter code: Nuclear distribution protein nudE homolog 1 (342 aa).

Residues arginine 45–lysine 189 adopt a coiled-coil conformation. Residues glutamate 89–leucine 157 form an interaction with PAFAH1B1 region. Disordered regions lie at residues alanine 182–threonine 203 and glycine 320–leucine 342. Positions arginine 322 to leucine 342 are enriched in polar residues.

The protein belongs to the nudE family. As to quaternary structure, self-associates. Interacts with PAFAH1B1. Post-translationally, phosphorylated in mitosis.

The protein localises to the cytoplasm. It is found in the cytoskeleton. It localises to the microtubule organizing center. The protein resides in the centrosome. Its subcellular location is the spindle. The protein localises to the chromosome. It is found in the centromere. It localises to the kinetochore. The protein resides in the cleavage furrow. Its subcellular location is the cytoplasmic vesicle membrane. In terms of biological role, required for centrosome duplication and formation and function of the mitotic spindle. In Gallus gallus (Chicken), this protein is Nuclear distribution protein nudE homolog 1 (NDE1).